The following is a 208-amino-acid chain: Small ribosomal subunit protein uS4 (208 aa).

The S4 RNA-binding domain maps to 95 to 161 (MRLDALVLRA…VPLQVAAAGA (67 aa)).

Belongs to the universal ribosomal protein uS4 family. As to quaternary structure, part of the 30S ribosomal subunit. Contacts protein S5. The interaction surface between S4 and S5 is involved in control of translational fidelity.

Functionally, one of the primary rRNA binding proteins, it binds directly to 16S rRNA where it nucleates assembly of the body of the 30S subunit. With S5 and S12 plays an important role in translational accuracy. The sequence is that of Small ribosomal subunit protein uS4 from Pseudarthrobacter chlorophenolicus (strain ATCC 700700 / DSM 12829 / CIP 107037 / JCM 12360 / KCTC 9906 / NCIMB 13794 / A6) (Arthrobacter chlorophenolicus).